The sequence spans 917 residues: MAYHGRGDGYDGHQLQDLPGGHNQGDQHDDAQAPFLSENPMPYDNDRLGTDTPPVRPVSAYSLTESYAPGAGTTRAGVAVNPTPPPHGGYGGGGVSSGVDQGYNYGGDYATDPAYRMSAIDEDDSWLRRQQPNAAPTGGLKRYATRKVKLVQGSVLSLDYPVPSAIRNAVQPKYRDEEGNNEEFFKMRYTAATCDPNDFTLKNGYDLRPRMYNRHTELLIAITYYNEDKVLLSRTLHSVMTNIRDIVNLKKSSFWNRGGPAWQKIVVCLVFDGLDKTDKNVLDVLATIGVYQDGVIKKDVDGKETVAHIFEYTSQLSVTPNQALIRPVDDGPQTLPPVQFIFCLKQKNTKKINSHRWLFNAFGRILNPEVCILLDAGTKPSPRSLLALWEGFYNDKDLGGACGEIHAMLGKGGKKLLNPLVAVQNFEYKISNILDKPLESAFGYVSVLPGAFSAYRFRAIMGRPLEQYFHGDHTLSKLLGKKGIEGMNIFKKNMFLAEDRILCFELVAKAGQKWHLSYIKAAKGETDVPEGAPEFISQRRRWLNGSFAASLYSLMHFGRMYKSGHNIVRMFFFHVQLIYNIANVIFTWFSLASYWLTTTVIMDLVGTPVTASSSSAEHHGWPFGDTVTPFFNAVLKYIYLAFVILQFILALGNRPKGSKWTYITSFFVFSLIQSYILVLSGYLVARAFSVPLDQQLQLDNAKDAMASLFGGSGSAGVILVALVTIYGLYFLASFMYLDPWHMFHSFPYYMLLMSTYINILMIYAFNNWHDVSWGTKGSDKAEALPSANVSKGEKDEAVVEEIEKPQEDIDQQFEATVRRALAPYKEDETPEPKDLEDSYKSFRTMLVVSWLFSNCLLAVVITSDNFNTFGIGQTASARTAWFFKFLLFATGALSVIRFIGFCWFLGRTGIMCCFARR.

Positions 1–11 (MAYHGRGDGYD) are enriched in basic and acidic residues. Residues 1–56 (MAYHGRGDGYDGHQLQDLPGGHNQGDQHDDAQAPFLSENPMPYDNDRLGTDTPPVR) are disordered. At 1–570 (MAYHGRGDGY…YKSGHNIVRM (570 aa)) the chain is on the extracellular side. Asn-544 is a glycosylation site (N-linked (GlcNAc...) asparagine). Residues 571-591 (FFFHVQLIYNIANVIFTWFSL) traverse the membrane as a helical segment. The Cytoplasmic portion of the chain corresponds to 592–629 (ASYWLTTTVIMDLVGTPVTASSSSAEHHGWPFGDTVTP). Residues 630–650 (FFNAVLKYIYLAFVILQFILA) form a helical membrane-spanning segment. Residues 651-664 (LGNRPKGSKWTYIT) are Extracellular-facing. The helical transmembrane segment at 665–685 (SFFVFSLIQSYILVLSGYLVA) threads the bilayer. At 686 to 716 (RAFSVPLDQQLQLDNAKDAMASLFGGSGSAG) the chain is on the cytoplasmic side. A helical membrane pass occupies residues 717–737 (VILVALVTIYGLYFLASFMYL). The Extracellular segment spans residues 738-744 (DPWHMFH). Residues 745–765 (SFPYYMLLMSTYINILMIYAF) traverse the membrane as a helical segment. The Cytoplasmic segment spans residues 766-843 (NNWHDVSWGT…DLEDSYKSFR (78 aa)). A helical transmembrane segment spans residues 844–864 (TMLVVSWLFSNCLLAVVITSD). The Extracellular segment spans residues 865–884 (NFNTFGIGQTASARTAWFFK). The chain crosses the membrane as a helical span at residues 885-905 (FLLFATGALSVIRFIGFCWFL). The Cytoplasmic portion of the chain corresponds to 906 to 917 (GRTGIMCCFARR).

It belongs to the chitin synthase family. Class III subfamily.

Its subcellular location is the cell membrane. It catalyses the reaction [(1-&gt;4)-N-acetyl-beta-D-glucosaminyl](n) + UDP-N-acetyl-alpha-D-glucosamine = [(1-&gt;4)-N-acetyl-beta-D-glucosaminyl](n+1) + UDP + H(+). In terms of biological role, polymerizes chitin, a structural polymer of the cell wall and septum, by transferring the sugar moiety of UDP-GlcNAc to the non-reducing end of the growing chitin polymer. This chain is Chitin synthase 1 (chs-1), found in Neurospora crassa (strain ATCC 24698 / 74-OR23-1A / CBS 708.71 / DSM 1257 / FGSC 987).